Reading from the N-terminus, the 384-residue chain is UDP-N-acetylglucosamine--N-acetylmuramyl-(pentapeptide) pyrophosphoryl-undecaprenol N-acetylglucosamine transferase (384 aa).

UDP-N-acetyl-alpha-D-glucosamine-binding positions include 22-24 (TGG), R179, S209, and Q312.

The protein belongs to the glycosyltransferase 28 family. MurG subfamily.

Its subcellular location is the cell inner membrane. It carries out the reaction di-trans,octa-cis-undecaprenyl diphospho-N-acetyl-alpha-D-muramoyl-L-alanyl-D-glutamyl-meso-2,6-diaminopimeloyl-D-alanyl-D-alanine + UDP-N-acetyl-alpha-D-glucosamine = di-trans,octa-cis-undecaprenyl diphospho-[N-acetyl-alpha-D-glucosaminyl-(1-&gt;4)]-N-acetyl-alpha-D-muramoyl-L-alanyl-D-glutamyl-meso-2,6-diaminopimeloyl-D-alanyl-D-alanine + UDP + H(+). It participates in cell wall biogenesis; peptidoglycan biosynthesis. Its function is as follows. Cell wall formation. Catalyzes the transfer of a GlcNAc subunit on undecaprenyl-pyrophosphoryl-MurNAc-pentapeptide (lipid intermediate I) to form undecaprenyl-pyrophosphoryl-MurNAc-(pentapeptide)GlcNAc (lipid intermediate II). This is UDP-N-acetylglucosamine--N-acetylmuramyl-(pentapeptide) pyrophosphoryl-undecaprenol N-acetylglucosamine transferase from Treponema pallidum (strain Nichols).